A 156-amino-acid chain; its full sequence is Small ribosomal subunit protein uS7c (156 aa).

It belongs to the universal ribosomal protein uS7 family. Part of the 30S ribosomal subunit.

It localises to the plastid. It is found in the chloroplast. In terms of biological role, one of the primary rRNA binding proteins, it binds directly to 16S rRNA where it nucleates assembly of the head domain of the 30S subunit. The protein is Small ribosomal subunit protein uS7c (rps7) of Bowenia serrulata (Byfield fern).